The chain runs to 255 residues: Geranylgeranylglyceryl phosphate synthase (255 aa).

Residues aspartate 34 and threonine 64 each coordinate Mg(2+). Sn-glycerol 1-phosphate is bound by residues 182-188, 213-214, and 235-236; these read YLEAGSG, GG, and GN.

This sequence belongs to the GGGP/HepGP synthase family. Group II subfamily. It depends on Mg(2+) as a cofactor.

Its subcellular location is the cytoplasm. The catalysed reaction is sn-glycerol 1-phosphate + (2E,6E,10E)-geranylgeranyl diphosphate = sn-3-O-(geranylgeranyl)glycerol 1-phosphate + diphosphate. It functions in the pathway membrane lipid metabolism; glycerophospholipid metabolism. Functionally, prenyltransferase that catalyzes the transfer of the geranylgeranyl moiety of geranylgeranyl diphosphate (GGPP) to the C3 hydroxyl of sn-glycerol-1-phosphate (G1P). This reaction is the first ether-bond-formation step in the biosynthesis of archaeal membrane lipids. This chain is Geranylgeranylglyceryl phosphate synthase, found in Saccharolobus islandicus (strain M.16.27) (Sulfolobus islandicus).